A 393-amino-acid polypeptide reads, in one-letter code: Lipid-A-disaccharide synthase (393 aa).

It belongs to the LpxB family.

The enzyme catalyses a lipid X + a UDP-2-N,3-O-bis[(3R)-3-hydroxyacyl]-alpha-D-glucosamine = a lipid A disaccharide + UDP + H(+). It functions in the pathway bacterial outer membrane biogenesis; LPS lipid A biosynthesis. Its function is as follows. Condensation of UDP-2,3-diacylglucosamine and 2,3-diacylglucosamine-1-phosphate to form lipid A disaccharide, a precursor of lipid A, a phosphorylated glycolipid that anchors the lipopolysaccharide to the outer membrane of the cell. This Colwellia psychrerythraea (strain 34H / ATCC BAA-681) (Vibrio psychroerythus) protein is Lipid-A-disaccharide synthase.